Reading from the N-terminus, the 183-residue chain is MADSENQGPAEPSQAAAAAEAAAEEVMAEGGAQGGDCDSAAGDPDSAAGEMAEEPQTPAENAPKPKNDFIESLPNSVKCRVLALKKLQKRCDKIEAKFDKEFQALEKKYNDIYKPLLAKIQELTGEMEGCAWTLEGEEEEEEEYEDDEEEGEEEEEEEEAAAEAAAGAKHDDAHAEMPDDAKK.

Positions 1–71 (MADSENQGPA…APKPKNDFIE (71 aa)) are disordered. Low complexity-rich tracts occupy residues 7–21 (QGPA…AAEA) and 28–49 (AEGG…SAAG). Residues 81–107 (VLALKKLQKRCDKIEAKFDKEFQALEK) adopt a coiled-coil conformation. Residues 135–161 (EGEEEEEEEYEDDEEEGEEEEEEEEAA) are compositionally biased toward acidic residues. Residues 135–183 (EGEEEEEEEYEDDEEEGEEEEEEEEAAAEAAAGAKHDDAHAEMPDDAKK) are disordered. A compositionally biased stretch (basic and acidic residues) spans 168–183 (AKHDDAHAEMPDDAKK).

Belongs to the nucleosome assembly protein (NAP) family.

It localises to the nucleus. This Pongo abelii (Sumatran orangutan) protein is Nucleosome assembly protein 1-like 5 (NAP1L5).